Here is a 600-residue protein sequence, read N- to C-terminus: Ligand-dependent nuclear receptor corepressor-like protein (600 aa).

Disordered regions lie at residues 1–24, 102–122, and 495–519; these read MEKG…QCRS, SVIG…GQSN, and DGTS…KRGR. Positions 104 to 122 are enriched in polar residues; the sequence is IGSSQSTPTEELSSQGQSN. Positions 514-566 constitute an HTH psq-type domain; the sequence is RKKRGRYRQYDHEIMEEAIAMVMSGKMSVSKAQGIYGVPHSTLEYKVKERSGT. A DNA-binding region (H-T-H motif) is located at residues 542 to 562; that stretch reads VSKAQGIYGVPHSTLEYKVKE. The segment at 581–600 is disordered; that stretch reads GLFNMTDSGTGSCKTSSKPV. Residues 583-600 show a composition bias toward polar residues; that stretch reads FNMTDSGTGSCKTSSKPV.

Its subcellular location is the nucleus. May act as transcription activator that binds DNA elements with the sequence 5'-CCCTATCGATCGATCTCTACCT-3'. This is Ligand-dependent nuclear receptor corepressor-like protein (LCORL) from Gallus gallus (Chicken).